A 299-amino-acid chain; its full sequence is Pyridoxal 5'-phosphate synthase subunit PdxS (299 aa).

Residue aspartate 24 participates in D-ribose 5-phosphate binding. Lysine 81 acts as the Schiff-base intermediate with D-ribose 5-phosphate in catalysis. Glycine 153 lines the D-ribose 5-phosphate pocket. Arginine 165 lines the D-glyceraldehyde 3-phosphate pocket. Residues glycine 219 and glycine 240–serine 241 contribute to the D-ribose 5-phosphate site.

Belongs to the PdxS/SNZ family. In the presence of PdxT, forms a dodecamer of heterodimers.

It carries out the reaction aldehydo-D-ribose 5-phosphate + D-glyceraldehyde 3-phosphate + L-glutamine = pyridoxal 5'-phosphate + L-glutamate + phosphate + 3 H2O + H(+). The protein operates within cofactor biosynthesis; pyridoxal 5'-phosphate biosynthesis. In terms of biological role, catalyzes the formation of pyridoxal 5'-phosphate from ribose 5-phosphate (RBP), glyceraldehyde 3-phosphate (G3P) and ammonia. The ammonia is provided by the PdxT subunit. Can also use ribulose 5-phosphate and dihydroxyacetone phosphate as substrates, resulting from enzyme-catalyzed isomerization of RBP and G3P, respectively. The protein is Pyridoxal 5'-phosphate synthase subunit PdxS of Methanococcus vannielii (strain ATCC 35089 / DSM 1224 / JCM 13029 / OCM 148 / SB).